Consider the following 253-residue polypeptide: Testis-expressed protein 47 (253 aa).

The sequence is that of Testis-expressed protein 47 from Rattus norvegicus (Rat).